Reading from the N-terminus, the 437-residue chain is Glutamyl-tRNA reductase (437 aa).

Substrate-binding positions include 46 to 49, Ser111, 116 to 118, and Gln122; these read TCNR and ERE. Cys47 (nucleophile) is an active-site residue. 192 to 197 provides a ligand contact to NADP(+); the sequence is GTGAYA. Residues 413-437 form a disordered region; the sequence is PDVPEETAPSTRQDPSDTPRPRAVG. Residues 426–437 are compositionally biased toward basic and acidic residues; sequence DPSDTPRPRAVG.

The protein belongs to the glutamyl-tRNA reductase family. Homodimer.

It catalyses the reaction (S)-4-amino-5-oxopentanoate + tRNA(Glu) + NADP(+) = L-glutamyl-tRNA(Glu) + NADPH + H(+). Its pathway is porphyrin-containing compound metabolism; protoporphyrin-IX biosynthesis; 5-aminolevulinate from L-glutamyl-tRNA(Glu): step 1/2. In terms of biological role, catalyzes the NADPH-dependent reduction of glutamyl-tRNA(Glu) to glutamate 1-semialdehyde (GSA). The protein is Glutamyl-tRNA reductase of Kocuria rhizophila (strain ATCC 9341 / DSM 348 / NBRC 103217 / DC2201).